We begin with the raw amino-acid sequence, 545 residues long: Chaperonin GroEL (545 aa).

ATP contacts are provided by residues 30–33, lysine 51, 87–91, glycine 415, 479–481, and aspartate 495; these read TLGP, DGTTT, and NAA. The tract at residues 526-545 is disordered; it reads KDDAPAPAMPDMGGMGGMGM.

The protein belongs to the chaperonin (HSP60) family. As to quaternary structure, forms a cylinder of 14 subunits composed of two heptameric rings stacked back-to-back. Interacts with the co-chaperonin GroES.

Its subcellular location is the cytoplasm. It catalyses the reaction ATP + H2O + a folded polypeptide = ADP + phosphate + an unfolded polypeptide.. Its function is as follows. Together with its co-chaperonin GroES, plays an essential role in assisting protein folding. The GroEL-GroES system forms a nano-cage that allows encapsulation of the non-native substrate proteins and provides a physical environment optimized to promote and accelerate protein folding. The polypeptide is Chaperonin GroEL (Paracidovorax citrulli (strain AAC00-1) (Acidovorax citrulli)).